Reading from the N-terminus, the 268-residue chain is Transcription initiation factor TFIID subunit 14b (268 aa).

Residues 1–20 (MTNSSSSKKQAQDQPETSEP) show a composition bias toward polar residues. Residues 1–36 (MTNSSSSKKQAQDQPETSEPTLKSLKTKMTKSDEKQ) are disordered. The YEATS domain occupies 38-182 (KLKDIEISVP…ESFLARVQNH (145 aa)). Positions 229–263 (DELLQLAAARQQVQAHIAKLRRQISLLEGQNQTVK) form a coiled coil.

This sequence belongs to the YAF9 family. Component of the TFIID complex. TFIID is composed of TATA binding protein (TBP) and a number of TBP-associated factors (TAFs) whose MWs range from 14-217 kDa. Interacts with TAF1, TAF4B and TAF12B. Component of the SWR1 chromatin-remodeling complex. Interacts with FLX, a component of the transcription activator complex FRI-C. Interacts with SWC4, and with EAF1A and EAF1B (via HSA domain). In terms of tissue distribution, expressed in roots, leaves, inflorescence and flowering tissues.

Its subcellular location is the cytoplasm. The protein localises to the nucleus. Functionally, negative regulator of flowering controlling the H4K5 acetylation levels in the FLC and FT chromatin. Positively regulates FLC expression. Component of the transcription factor IID (TFIID) complex that is essential for mediating regulation of RNA polymerase transcription. Component of the SWR1 complex which mediates the ATP-dependent exchange of histone H2A for the H2A variant HZT1 leading to transcriptional regulation of selected genes by chromatin remodeling. Component of a NuA4 histone acetyltransferase complex which is involved in transcriptional activation of selected genes principally by acetylation of nucleosomal histones H4 and H2A. The chain is Transcription initiation factor TFIID subunit 14b from Arabidopsis thaliana (Mouse-ear cress).